Here is a 712-residue protein sequence, read N- to C-terminus: Aryl hydrocarbon receptor nuclear translocator 2 (712 aa).

Disordered regions lie at residues 1–20 and 35–74; these read MATP…PGSV and MAGA…IERR. Arg42 is subject to Omega-N-methylarginine. Positions 63–73 are enriched in basic and acidic residues; that stretch reads FSRENHSEIER. The region spanning 63 to 116 is the bHLH domain; that stretch reads FSRENHSEIERRRRNKMTQYITELSDMVPTCSALARKPDKLTILRMAVSHMKSM. PAS domains lie at 134–209 and 323–393; these read TEQE…MTGR and PVCM…VKLK. A PAC domain is found at 398 to 441; sequence SVMYRFRTKNREWLLIRTSSFTFQNPYSDEIEYVICTNTNVKQL. The disordered stretch occupies residues 573–712; the sequence is AWTGSRPPFP…DLGMFPPFSE (140 aa). 2 stretches are compositionally biased toward low complexity: residues 597-626 and 653-675; these read SSHP…AYPS and SQWQ…QPGQ.

In terms of assembly, efficient DNA binding requires dimerization with another bHLH protein. Heterodimer with NPAS4 or SIM1. Heterodimer with the aryl hydrocarbon receptor (AHR) or the SIM1 protein. Interacts with TACC3.

The protein resides in the nucleus. Transcription factor that plays a role in the development of the hypothalamo-pituitary axis, postnatal brain growth, and visual and renal function. Specifically recognizes the xenobiotic response element (XRE). The sequence is that of Aryl hydrocarbon receptor nuclear translocator 2 (Arnt2) from Rattus norvegicus (Rat).